Reading from the N-terminus, the 969-residue chain is Exoribonuclease II, mitochondrial (969 aa).

A mitochondrion-targeting transit peptide spans 1 to 41; sequence MVVRRKVHVLLIARSFHSYTPCFRVTTRGKRQRSKSKQQAK. The segment covering 28–38 has biased composition (basic residues); it reads RGKRQRSKSKQ. A disordered region spans residues 28-54; the sequence is RGKRQRSKSKQQAKVELDHTRELDNDQ. A compositionally biased stretch (basic and acidic residues) spans 40–51; sequence AKVELDHTRELD. Residues 522-853 form the RNB domain; it reads RYDFGDLRVF…NHLQIHRHLQ (332 aa).

The protein belongs to the RNR ribonuclease family. As to quaternary structure, MSU1 and SUV3 are the two components of the mitochondrial degradosome (mtEXO).

The protein resides in the mitochondrion matrix. It carries out the reaction Exonucleolytic cleavage in the 3'- to 5'-direction to yield nucleoside 5'-phosphates.. Functionally, essential for mitochondrial biogenesis. In terms of biological role, required for intron-independent turnover and processing of mitochondrial RNA. Participates in 3' mtRNA processing where it hydrolyzes single-stranded RNA or partially double-stranded RNA with 3' single-stranded tails. The protein is Exoribonuclease II, mitochondrial (DSS1) of Saccharomyces cerevisiae (strain ATCC 204508 / S288c) (Baker's yeast).